Here is a 97-residue protein sequence, read N- to C-terminus: Co-chaperonin GroES (97 aa).

This sequence belongs to the GroES chaperonin family. In terms of assembly, heptamer of 7 subunits arranged in a ring. Interacts with the chaperonin GroEL.

It localises to the cytoplasm. In terms of biological role, together with the chaperonin GroEL, plays an essential role in assisting protein folding. The GroEL-GroES system forms a nano-cage that allows encapsulation of the non-native substrate proteins and provides a physical environment optimized to promote and accelerate protein folding. GroES binds to the apical surface of the GroEL ring, thereby capping the opening of the GroEL channel. This is Co-chaperonin GroES from Buchnera aphidicola subsp. Cinara cedri (strain Cc).